A 182-amino-acid polypeptide reads, in one-letter code: MGLGQGGGLAQRGTFAEGLKNDVVVVALSPGRRHLTKPVCEITYGIRESGIQTSVQVLNAGSGLPADAPNSLGSTFGLKPEEVEQVNRHKLCIIHFGNVKSHVVYKARLFLRFVTILTIVVCQTPIDMEDFAKIGIKTADVIPIEPKTKGTIVEIVTGVVRGESSPQSKIDEIIEKIKKHLK.

MCR is composed of three subunits: alpha, beta, and gamma. The function of proteins C and D is not known.

The sequence is that of Methyl-coenzyme M reductase operon protein C (mcrC) from Methanococcus voltae.